Here is a 287-residue protein sequence, read N- to C-terminus: Polyamine aminopropyltransferase (287 aa).

The 234-residue stretch at 5–238 (ETWHETLHDH…GIMTFAWASQ (234 aa)) folds into the PABS domain. Gln33 contacts S-methyl-5'-thioadenosine. Spermidine-binding residues include His64 and Asp88. S-methyl-5'-thioadenosine-binding positions include Glu108 and 140–141 (DG). The active-site Proton acceptor is the Asp158. Residue 158–161 (DCTD) coordinates spermidine. Position 165 (Pro165) interacts with S-methyl-5'-thioadenosine.

Belongs to the spermidine/spermine synthase family. As to quaternary structure, homodimer or homotetramer.

It is found in the cytoplasm. The catalysed reaction is S-adenosyl 3-(methylsulfanyl)propylamine + putrescine = S-methyl-5'-thioadenosine + spermidine + H(+). It functions in the pathway amine and polyamine biosynthesis; spermidine biosynthesis; spermidine from putrescine: step 1/1. In terms of biological role, catalyzes the irreversible transfer of a propylamine group from the amino donor S-adenosylmethioninamine (decarboxy-AdoMet) to putrescine (1,4-diaminobutane) to yield spermidine. The sequence is that of Polyamine aminopropyltransferase from Sodalis glossinidius (strain morsitans).